The chain runs to 427 residues: Protein phosphatase methylesterase 1 (427 aa).

The segment at 1 to 49 (MSELQKSFAKAKLAKLPPEAPPFSMHPPRDEDDSESASSTGTVVPSPSR) is disordered. A compositionally biased stretch (polar residues) spans 36–49 (SASSTGTVVPSPSR). Active-site residues include Ser-207, Asp-233, and His-364. The tract at residues 402–427 (SAAMKQGAEAGAVPPFGRGQGSSHKP) is disordered.

Belongs to the AB hydrolase superfamily.

The catalysed reaction is [phosphatase 2A protein]-C-terminal L-leucine methyl ester + H2O = [phosphatase 2A protein]-C-terminal L-leucine + methanol + H(+). Demethylates proteins that have been reversibly carboxymethylated. Demethylates the phosphatase PP2A catalytic subunit. In Aspergillus oryzae (strain ATCC 42149 / RIB 40) (Yellow koji mold), this protein is Protein phosphatase methylesterase 1 (ppe1).